The chain runs to 345 residues: uncharacterized protein (345 aa).

The protein belongs to the proline racemase family.

This is an uncharacterized protein from Bacillus anthracis.